The primary structure comprises 517 residues: MKIVSWNINGIRATRVGLKETLDSLDADIICLQETKVTRDLLDEPSAIVEGYNSYFSFSRVRSGYSGVATFCKSSTTPQAAEEGLSGVFCNRTGSVGCYGNTEQFLEEELQSLDQEGRAVLTQHRILNCEDKEETLTVINVYCPRADPEKPERKTYKLRFYHLLQTRAEAILQNGGHVIILGDVNTSHRPLDHCDPTDLETFEENPGRQWLNQFLGDPIPSQKGDSETVMPPSAGSGLFYDSFRYFHPTQKNAFTCWCSASGARQTNYGTRIDYILGNRELVESEFLDSVIMPEVEGSDHCPVKAFMKCQPIAANKCPPLCTKYLPEFAGRQQKLLQFLVKKENTLGNTTEESSELTGTPSFTEGADISTVRKRPSDKLNSTSKKKSKIVTKNGQGNLLSFFKPERQKLTMATECNPIEVPICKKEKTVQKDLQPATPAVKYNKPQTAFWKSLLKGPPPPPNCKGHSEPCVLRTVKKAGPNCGRQFYVCARPEGHSSNPQARCNFFLWLTKKAGCED.

Mg(2+) is bound by residues asparagine 9 and glutamate 34. Positions 82–90 match the Claspin-like CKB motif motif; that stretch reads EEGLSGVFC. Residue tyrosine 142 is part of the active site. Residues aspartate 183, asparagine 185, aspartate 299, and histidine 300 each contribute to the Mg(2+) site. Aspartate 183 serves as the catalytic Proton donor/acceptor. Histidine 300 serves as the catalytic Proton acceptor. Residues 347-362 are compositionally biased toward polar residues; the sequence is GNTTEESSELTGTPSF. Positions 347–366 are disordered; the sequence is GNTTEESSELTGTPSFTEGA. A PCNA interacting protein (PIP) box motif is present at residues 395–402; sequence QGNLLSFF. Cysteine 463, histidine 466, cysteine 489, and cysteine 503 together coordinate Zn(2+). The GRF-type zinc finger occupies 463-512; sequence CKGHSEPCVLRTVKKAGPNCGRQFYVCARPEGHSSNPQARCNFFLWLTKK.

The protein belongs to the DNA repair enzymes AP/ExoA family. Interacts (via PIP box and GRF-type Zinc finger domain) with pcna; the interaction is required for 3 -5 SSB end resection, assembly of a checkpoint protein complex to SSB sites, and SSB signaling. Interacts with chek1. Mg(2+) serves as cofactor. The cofactor is Mn(2+). As to expression, expressed in eggs (at protein level).

It is found in the nucleus. The protein resides in the chromosome. The protein localises to the cytoplasm. Its subcellular location is the mitochondrion. The enzyme catalyses Exonucleolytic cleavage in the 3'- to 5'-direction to yield nucleoside 5'-phosphates.. With respect to regulation, 3'-5' nuclease activity is stimulated in presence of pcna. Functions as a weak apurinic/apyrimidinic (AP) endodeoxyribonuclease in the DNA base excision repair (BER) pathway of DNA lesions induced by oxidative and alkylating agents. Initiates repair of AP sites in DNA by catalyzing hydrolytic incision of the phosphodiester backbone immediately adjacent to the damage, generating a single-strand break with 5'-deoxyribose phosphate and 3'-hydroxyl ends. Exhibits 3'-5' exonuclease activity on a 3' DNA substrate; nuclease activity is stimulated by interaction with pcna. Has a preference for the 3' recessed ends over blunt-ended substrates, in both the presence and the absence of pcna. Generates single-stranded DNA (ssDNA) via 3'-5' single-strand break (SSB) end resection, thereby promoting a DNA damage response via replication protein A (rpa2)-binding to ssDNA and the recruitment of a checkpoint protein complex, including atr, atr-interacting protein atrip, and rad9, to damage sites following oxidative stress. Plays a role in reversing blocked 3' DNA ends, problematic lesions that preclude DNA synthesis. Required for chek1 phosphorylation induced by hydrogen peroxide but not by stalled replication forks. The polypeptide is DNA-(apurinic or apyrimidinic site) endonuclease 2 (Xenopus laevis (African clawed frog)).